A 150-amino-acid chain; its full sequence is Urease accessory protein UreE (150 aa).

This sequence belongs to the UreE family.

The protein localises to the cytoplasm. Functionally, involved in urease metallocenter assembly. Binds nickel. Probably functions as a nickel donor during metallocenter assembly. The sequence is that of Urease accessory protein UreE from Streptococcus salivarius (strain 57.I).